The following is a 112-amino-acid chain: UPF0102 protein Spea_0251 (112 aa).

The protein belongs to the UPF0102 family.

This Shewanella pealeana (strain ATCC 700345 / ANG-SQ1) protein is UPF0102 protein Spea_0251.